We begin with the raw amino-acid sequence, 101 residues long: Small ribosomal subunit protein uS14 (101 aa).

This sequence belongs to the universal ribosomal protein uS14 family. As to quaternary structure, part of the 30S ribosomal subunit. Contacts proteins S3 and S10.

Its function is as follows. Binds 16S rRNA, required for the assembly of 30S particles and may also be responsible for determining the conformation of the 16S rRNA at the A site. The sequence is that of Small ribosomal subunit protein uS14 from Sodalis glossinidius (strain morsitans).